A 600-amino-acid chain; its full sequence is Torsin-1A-interacting protein 1 (600 aa).

Basic and acidic residues predominate over residues 1–14; that stretch reads MAGEGQRAEPEREG. Disordered stretches follow at residues 1–261 and 310–346; these read MAGE…YKES and MRSI…QPKS. At 1–354 the chain is on the nuclear side; that stretch reads MAGEGQRAEP…KSVSSVKTKR (354 aa). Serine 61 carries the post-translational modification Phosphoserine. Composition is skewed to basic and acidic residues over residues 71 to 81, 91 to 102, and 116 to 125; these read FEPRAAKEKAR, FRPDSAKEEVRE, and RLHEAEEMQT. Serine 137, serine 145, serine 156, serine 158, serine 159, and serine 189 each carry phosphoserine. A compositionally biased stretch (low complexity) spans 192–203; sequence PLISLRRPPLRS. Residues 219 to 232 show a composition bias toward acidic residues; the sequence is EEGETEENDQDSFD. At threonine 223 the chain carries Phosphothreonine. A phosphoserine mark is found at serine 230, serine 233, and serine 244. A compositionally biased stretch (polar residues) spans 247–261; that stretch reads SGDQTTRSSSQYKES. Serine 322 bears the Phosphoserine mark. Lysine 325 is covalently cross-linked (Glycyl lysine isopeptide (Lys-Gly) (interchain with G-Cter in SUMO2)). Over residues 325–346 the composition is skewed to polar residues; it reads KSELGNQSPSTSNQQMTGQPKS. Serine 332 is subject to Phosphoserine. The helical transmembrane segment at 355 to 371 threads the bilayer; the sequence is YWPFAVIAALLIGGFLY. The Perinuclear space portion of the chain corresponds to 372-600; that stretch reads TRPPEAETTA…ENDLKKGICL (229 aa). Positions 373–600 are interaction with TOR1A; the sequence is RPPEAETTAV…ENDLKKGICL (228 aa). The stretch at 376 to 452 forms a coiled coil; it reads EAETTAVQEF…SEQIADAYSS (77 aa). Asparagine 416 is a glycosylation site (N-linked (GlcNAc...) asparagine).

The protein belongs to the TOR1AIP family. In terms of assembly, interacts with ATP1B4. Interacts with TOR1A (ATP-bound). Interacts with TOR1B, TOR2A and TOR3A. Interacts with VIM.

The protein resides in the nucleus inner membrane. Required for nuclear membrane integrity. Induces TOR1A and TOR1B ATPase activity and is required for their location on the nuclear membrane. Binds to A- and B-type lamins. Possible role in membrane attachment and assembly of the nuclear lamina. This is Torsin-1A-interacting protein 1 (TOR1AIP1) from Bos taurus (Bovine).